The sequence spans 410 residues: Transcription factor E2F4 (410 aa).

Residues 1–20 (MAEAGPQAPPPPGTPSRHEK) form a disordered region. An N-acetylalanine modification is found at A2. Residues 16-85 (SRHEKSLGLL…KNSIQWKGVG (70 aa)) mediate DNA binding. The tract at residues 43–65 (LKLAADTLAVRQKRRIYDITNVL) is leucine-zipper. A DEF box motif is present at residues 48–85 (DTLAVRQKRRIYDITNVLEGIGLIEKKSKNSIQWKGVG). Residues 86–181 (PGCNTREIAD…GLNGQKKYQI (96 aa)) are dimerization. Disordered stretches follow at residues 203–258 (PPVA…GSTQ) and 303–341 (SALL…DPTG). 2 stretches are compositionally biased toward low complexity: residues 231–252 (PALA…TPTP) and 308–324 (SSSS…SSSS). The tract at residues 334 to 410 (PIKADPTGVL…DLFDVPVLKL (77 aa)) is transactivation. S381 carries the phosphoserine modification. Positions 386 to 389 (DHDY) match the HCFC1-binding-motif (HBM) motif. The tract at residues 387-404 (HDYIYNLDESEGVCDLFD) is interaction with RBL1 and RBL2.

This sequence belongs to the E2F/DP family. In terms of assembly, component of the DRTF1/E2F transcription factor complex. Binds cooperatively with TFDP1/Dp-1 to E2F sites. The E2F4/TFDP1 dimer interacts preferentially with pocket protein RBL1, which inhibits the E2F transactivation domain. Lower affinity interaction has been found with retinoblastoma protein RB1. Interacts with TRRAP, which probably mediates its interaction with histone acetyltransferase complexes, leading to transcription activation. Interacts with HCFC1. Component of the DREAM complex (also named LINC complex) at least composed of E2F4, E2F5, LIN9, LIN37, LIN52, LIN54, MYBL1, MYBL2, RBL1, RBL2, RBBP4, TFDP1 and TFDP2. The complex exists in quiescent cells where it represses cell cycle-dependent genes. It dissociates in S phase when LIN9, LIN37, LIN52 and LIN54 form a subcomplex that binds to MYBL2. Interacts with PML. Interacts with CEBPA (when phosphorylated). In terms of processing, differentially phosphorylated in vivo.

It is found in the nucleus. Its function is as follows. Transcription activator that binds DNA cooperatively with DP proteins through the E2 recognition site, 5'-TTTC[CG]CGC-3' found in the promoter region of a number of genes whose products are involved in cell cycle regulation or in DNA replication. The DRTF1/E2F complex functions in the control of cell-cycle progression from G1 to S phase. E2F4 binds with high affinity to RBL1 and RBL2. In some instances can also bind RB1. Specifically required for multiciliate cell differentiation: together with MCIDAS and E2F5, binds and activate genes required for centriole biogenesis. The protein is Transcription factor E2F4 (E2f4) of Mus musculus (Mouse).